A 210-amino-acid chain; its full sequence is UMP-CMP kinase 3 (210 aa).

ATP is bound at residue 34–39 (GSGKGT). Residues 54-83 (SAGDLLRAEIKSGSENGTMIENMIKEGKIV) are NMP. Residues Arg60, 81 to 83 (KIV), and 108 to 111 (GFPR) each bind a ribonucleoside 5'-phosphate. Residue Asn115 participates in CMP binding. Residues 146-154 (GRNQGRVDD) form an LID region. ATP is bound at residue Arg147. A ribonucleoside 5'-phosphate contacts are provided by Arg151 and Arg162. Lys190 serves as a coordination point for ATP.

It belongs to the adenylate kinase family. UMP-CMP kinase subfamily. As to quaternary structure, monomer. Requires Mg(2+) as cofactor.

The protein resides in the cytoplasm. Its subcellular location is the nucleus. It catalyses the reaction UMP + ATP = UDP + ADP. It carries out the reaction CMP + ATP = CDP + ADP. The enzyme catalyses dCMP + ATP = dCDP + ADP. Functionally, catalyzes the phosphorylation of pyrimidine nucleoside monophosphates at the expense of ATP. Plays an important role in de novo pyrimidine nucleotide biosynthesis. Has preference for UMP and CMP as phosphate acceptors. This is UMP-CMP kinase 3 (URA6) from Oryza sativa subsp. japonica (Rice).